Reading from the N-terminus, the 228-residue chain is L-ribulose-5-phosphate 4-epimerase UlaF (228 aa).

Substrate contacts are provided by residues 26 to 27, 43 to 44, and 72 to 73; these read GN, SG, and SS. Zn(2+)-binding residues include Asp74, His93, and His95. The Proton donor/acceptor role is filled by Asp118. Residue His167 coordinates Zn(2+). The active-site Proton donor/acceptor is the Tyr225.

This sequence belongs to the aldolase class II family. AraD/FucA subfamily. The cofactor is Zn(2+).

It catalyses the reaction L-ribulose 5-phosphate = D-xylulose 5-phosphate. It participates in cofactor degradation; L-ascorbate degradation; D-xylulose 5-phosphate from L-ascorbate: step 4/4. In terms of biological role, catalyzes the isomerization of L-ribulose 5-phosphate to D-xylulose 5-phosphate. Is involved in the anaerobic L-ascorbate utilization. This Escherichia coli O45:K1 (strain S88 / ExPEC) protein is L-ribulose-5-phosphate 4-epimerase UlaF.